The primary structure comprises 171 residues: Calcium channel flower homolog (171 aa).

The Cytoplasmic portion of the chain corresponds to 1–31 (MSGSVAAGAAAGPVPPAQEEGMTWWYRWLCR). Residues 32-52 (LAGVLGAVSCAISGLFNCVTI) form a helical membrane-spanning segment. Over 53–56 (HPLN) the chain is Extracellular. Residues 57–77 (IAAGVWMIMNAFILLLCEAPF) form a helical membrane-spanning segment. Over 78 to 101 (CCQFVEFANTVAEKVDRLRSWQKA) the chain is Cytoplasmic. The chain crosses the membrane as a helical span at residues 102–122 (VFYCGMAIVPIVMSLTLTTLL). Over 123–124 (GN) the chain is Extracellular. Residues 125–141 (AIAFATGVLYGLSALGK) traverse the membrane as a helical segment. Residues 142–171 (KGDAISYARIQQQRQQADEEKLAETFEGEL) lie on the Cytoplasmic side of the membrane.

It belongs to the calcium channel flower family. Interacts with adaptor protein complex 2 (AP-2). In terms of tissue distribution, expressed in calyces in the brain (at protein level). Detected in cultured hippocampal neurons (at protein level).

It localises to the cell membrane. It is found in the cytoplasmic vesicle. Its subcellular location is the secretory vesicle. The protein localises to the synaptic vesicle. The protein resides in the golgi apparatus. It localises to the vesicle. In terms of biological role, transmembrane protein which mediates synaptic endocytosis and fitness-based cell culling. In response to different stimulus strengths, controls two major modes of synaptic vesicle (SV) retrieval in hippocampal neurons; Clathrin-mediated endocytosis (CME) in response to mild stimulation and activity-dependent bulk endocytosis (ADBE) in response to strong stimulation. In cytotoxic T-lymphoocytes (CTLs) facilitates calcium-dependent endocytosis of cytotoxic granules (CGs) at the immuno synapse. Different isoforms work as fitness fingerprints in 'loser' and 'winner' cells and thereby mediate win/lose decisions as part of the cell competition process. The sequence is that of Calcium channel flower homolog (Cacfd1) from Rattus norvegicus (Rat).